A 125-amino-acid polypeptide reads, in one-letter code: Large ribosomal subunit protein bL12 (125 aa).

Positions 96-125 are disordered; the sequence is PAPVKEGATKDEAEEIKKKIEEAGGTAELK. A compositionally biased stretch (basic and acidic residues) spans 102–117; the sequence is GATKDEAEEIKKKIEE.

The protein belongs to the bacterial ribosomal protein bL12 family. As to quaternary structure, homodimer. Part of the ribosomal stalk of the 50S ribosomal subunit. Forms a multimeric L10(L12)X complex, where L10 forms an elongated spine to which 2 to 4 L12 dimers bind in a sequential fashion. Binds GTP-bound translation factors.

Functionally, forms part of the ribosomal stalk which helps the ribosome interact with GTP-bound translation factors. Is thus essential for accurate translation. The sequence is that of Large ribosomal subunit protein bL12 from Alcanivorax borkumensis (strain ATCC 700651 / DSM 11573 / NCIMB 13689 / SK2).